A 1778-amino-acid polypeptide reads, in one-letter code: Nuclear receptor corepressor 1 (1778 aa).

The 52-residue stretch at 125–176 (DRLEEWSPEERSLFKSRQADHVKIFHGLTEFFVDKTASDLVLFYYMNKKTED) folds into the SANT domain. Positions 356–398 (WTDDEKTKLVTLINSSPTLDWVSISEGMNRRPNECKMQYDAMN) constitute a Myb-like domain. A compositionally biased stretch (acidic residues) spans 409 to 421 (VDEEDGNGQEEGG). Disordered stretches follow at residues 409 to 671 (VDEE…TVST), 992 to 1024 (SLTP…AGRS), 1195 to 1218 (KLQQ…ATPQ), 1276 to 1339 (QHLQ…SRSV), 1414 to 1434 (PPKT…RTLS), and 1646 to 1718 (AAPT…PPLP). Composition is skewed to low complexity over residues 431 to 442 (SSAAARRSGLAR) and 450 to 469 (TPRA…VTRA). A compositionally biased stretch (acidic residues) spans 478–493 (DLGEEIDEMEIEDNDE). Over residues 494 to 513 (DASRGSRGKDSKAPSDRDGS) the composition is skewed to basic and acidic residues. 2 stretches are compositionally biased toward acidic residues: residues 517-545 (MEGD…EEEE) and 599-616 (ESDD…DVDE). 2 stretches are compositionally biased toward low complexity: residues 626–639 (SSSS…SVGG) and 649–671 (LVQQ…TVST). Residues 1276–1285 (QHLQQQQQHH) are compositionally biased toward low complexity. Low complexity predominate over residues 1687 to 1696 (SSVNSNVSDV).

It belongs to the N-CoR nuclear receptor corepressors family. Interacts with gex-3. Interacts (via C-terminus) with nhr-60. In larvae, expressed in pharyngeal neurons, ventral and dorsal nerve cords, tail neurons, egg-laying neurons and egg-laying muscles. Detected in the neurons of the pharyngeal nerve ring, head neurons, tail neurons and egg-laying muscles in adults. Detected in male-specific tail ganglia and rays in males.

The protein localises to the nucleus. Its function is as follows. Mediates transcriptional repression by certain nuclear receptors. Plays a role in development and neuronal function. May play a role in muscle-specific oxidative mitochondrial metabolism. The chain is Nuclear receptor corepressor 1 from Caenorhabditis elegans.